The following is a 357-amino-acid chain: Chorismate synthase (357 aa).

An NADP(+)-binding site is contributed by Arg-47. FMN contacts are provided by residues 123-125 (RAS), Gly-281, 296-300 (KPTSS), and Arg-324.

It belongs to the chorismate synthase family. As to quaternary structure, homotetramer. FMNH2 serves as cofactor.

The enzyme catalyses 5-O-(1-carboxyvinyl)-3-phosphoshikimate = chorismate + phosphate. It functions in the pathway metabolic intermediate biosynthesis; chorismate biosynthesis; chorismate from D-erythrose 4-phosphate and phosphoenolpyruvate: step 7/7. Catalyzes the anti-1,4-elimination of the C-3 phosphate and the C-6 proR hydrogen from 5-enolpyruvylshikimate-3-phosphate (EPSP) to yield chorismate, which is the branch point compound that serves as the starting substrate for the three terminal pathways of aromatic amino acid biosynthesis. This reaction introduces a second double bond into the aromatic ring system. The protein is Chorismate synthase of Chlamydia trachomatis serovar A (strain ATCC VR-571B / DSM 19440 / HAR-13).